The chain runs to 318 residues: Nucleotide-binding protein Lcho_3490 (318 aa).

Position 35 to 42 (35 to 42) interacts with ATP; it reads GISGGGKS. 84 to 87 contributes to the GTP binding site; that stretch reads DVRN.

This sequence belongs to the RapZ-like family.

Functionally, displays ATPase and GTPase activities. This Leptothrix cholodnii (strain ATCC 51168 / LMG 8142 / SP-6) (Leptothrix discophora (strain SP-6)) protein is Nucleotide-binding protein Lcho_3490.